The sequence spans 366 residues: Histone-lysine N-methyltransferase SETD7 (366 aa).

MORN repeat units follow at residues 36-58, 59-81, and 106-128; these read FEGN…DGST, LEGY…DGGV, and FKGQ…DGGS. The 123-residue stretch at 214–336 folds into the SET domain; it reads ERVYVADSLI…AEEELTVAYG (123 aa). Residues 226-228, Asn-296, His-297, and Glu-356 each bind S-adenosyl-L-methionine; that span reads AGE.

This sequence belongs to the class V-like SAM-binding methyltransferase superfamily. Histone-lysine methyltransferase family. SET7 subfamily. Interacts with IPF1/PDX-1.

It is found in the nucleus. The protein resides in the chromosome. It catalyses the reaction L-lysyl(4)-[histone H3] + S-adenosyl-L-methionine = N(6)-methyl-L-lysyl(4)-[histone H3] + S-adenosyl-L-homocysteine + H(+). The enzyme catalyses L-lysyl-[protein] + S-adenosyl-L-methionine = N(6)-methyl-L-lysyl-[protein] + S-adenosyl-L-homocysteine + H(+). In terms of biological role, histone methyltransferase that specifically monomethylates 'Lys-4' of histone H3. H3 'Lys-4' methylation represents a specific tag for epigenetic transcriptional activation. Plays a central role in the transcriptional activation of genes such as collagenase or insulin. Recruited by IPF1/PDX-1 to the insulin promoter, leading to activate transcription. Also has methyltransferase activity toward non-histone proteins such as CGAS, p53/TP53, TAF10, and possibly TAF7 by recognizing and binding the [KR]-[STA]-K in substrate proteins. Monomethylates 'Lys-189' of TAF10, leading to increase the affinity of TAF10 for RNA polymerase II. Monomethylates 'Lys-372' of p53/TP53, stabilizing p53/TP53 and increasing p53/TP53-mediated transcriptional activation. Monomethylates 'Lys-491' of CGAS, promoting interaction between SGF29 and CGAS. This Mus musculus (Mouse) protein is Histone-lysine N-methyltransferase SETD7 (Setd7).